Consider the following 589-residue polypeptide: Protein FAM161B (589 aa).

3 disordered regions span residues Met-1–Trp-166, Lys-265–Pro-297, and Ala-386–Ser-444. The segment covering Pro-92–Glu-106 has biased composition (acidic residues). Residues Thr-151–Trp-166 are compositionally biased toward polar residues. A compositionally biased stretch (basic and acidic residues) spans Lys-265 to Gln-275. The segment covering Ser-287–Pro-297 has biased composition (basic residues). The segment covering Ala-386–Arg-396 has biased composition (basic and acidic residues). Residues Glu-510–Glu-577 adopt a coiled-coil conformation.

It belongs to the FAM161 family. As to quaternary structure, interacts with FAM161A.

The sequence is that of Protein FAM161B (Fam161b) from Mus musculus (Mouse).